The chain runs to 157 residues: 2-C-methyl-D-erythritol 2,4-cyclodiphosphate synthase (157 aa).

A divalent metal cation-binding residues include Asp9 and His11. Residues Asp9–His11 and His35–Ser36 each bind 4-CDP-2-C-methyl-D-erythritol 2-phosphate. His43 is a binding site for a divalent metal cation. Residues Asp57–Gly59, Phe62–Asp66, Ala101–Ala107, Thr133–Glu136, Phe140, and Arg143 contribute to the 4-CDP-2-C-methyl-D-erythritol 2-phosphate site.

This sequence belongs to the IspF family. In terms of assembly, homotrimer. A divalent metal cation serves as cofactor.

The catalysed reaction is 4-CDP-2-C-methyl-D-erythritol 2-phosphate = 2-C-methyl-D-erythritol 2,4-cyclic diphosphate + CMP. Its pathway is isoprenoid biosynthesis; isopentenyl diphosphate biosynthesis via DXP pathway; isopentenyl diphosphate from 1-deoxy-D-xylulose 5-phosphate: step 4/6. Its function is as follows. Involved in the biosynthesis of isopentenyl diphosphate (IPP) and dimethylallyl diphosphate (DMAPP), two major building blocks of isoprenoid compounds. Catalyzes the conversion of 4-diphosphocytidyl-2-C-methyl-D-erythritol 2-phosphate (CDP-ME2P) to 2-C-methyl-D-erythritol 2,4-cyclodiphosphate (ME-CPP) with a corresponding release of cytidine 5-monophosphate (CMP). This Listeria monocytogenes serotype 4a (strain HCC23) protein is 2-C-methyl-D-erythritol 2,4-cyclodiphosphate synthase.